The primary structure comprises 356 residues: Surface presentation of antigens protein SpaS (356 aa).

A run of 5 helical transmembrane segments spans residues 29 to 49, 72 to 92, 132 to 152, 179 to 199, and 261 to 281; these read LIIA…GSFN, LAVF…CLVC, VKDT…AIIC, LLAL…LDAI, and HITI…ISVY.

This sequence belongs to the type III secretion exporter family.

The protein resides in the cell inner membrane. Its function is as follows. Involved in a secretory pathway responsible for the surface presentation of determinants needed for the entry of Salmonella species into mammalian cells. The polypeptide is Surface presentation of antigens protein SpaS (spaS) (Salmonella typhimurium (strain LT2 / SGSC1412 / ATCC 700720)).